A 562-amino-acid chain; its full sequence is Dihydroxy-acid dehydratase (562 aa).

Asp-80 contacts Mg(2+). Cys-121 serves as a coordination point for [2Fe-2S] cluster. Asp-122 and Lys-123 together coordinate Mg(2+). Lys-123 is subject to N6-carboxylysine. Cys-194 contacts [2Fe-2S] cluster. Glu-446 is a binding site for Mg(2+). Ser-472 functions as the Proton acceptor in the catalytic mechanism.

Belongs to the IlvD/Edd family. In terms of assembly, homodimer. Requires [2Fe-2S] cluster as cofactor. The cofactor is Mg(2+).

It carries out the reaction (2R)-2,3-dihydroxy-3-methylbutanoate = 3-methyl-2-oxobutanoate + H2O. It catalyses the reaction (2R,3R)-2,3-dihydroxy-3-methylpentanoate = (S)-3-methyl-2-oxopentanoate + H2O. The protein operates within amino-acid biosynthesis; L-isoleucine biosynthesis; L-isoleucine from 2-oxobutanoate: step 3/4. It functions in the pathway amino-acid biosynthesis; L-valine biosynthesis; L-valine from pyruvate: step 3/4. Its function is as follows. Functions in the biosynthesis of branched-chain amino acids. Catalyzes the dehydration of (2R,3R)-2,3-dihydroxy-3-methylpentanoate (2,3-dihydroxy-3-methylvalerate) into 2-oxo-3-methylpentanoate (2-oxo-3-methylvalerate) and of (2R)-2,3-dihydroxy-3-methylbutanoate (2,3-dihydroxyisovalerate) into 2-oxo-3-methylbutanoate (2-oxoisovalerate), the penultimate precursor to L-isoleucine and L-valine, respectively. In Staphylococcus aureus (strain Mu50 / ATCC 700699), this protein is Dihydroxy-acid dehydratase.